We begin with the raw amino-acid sequence, 103 residues long: Large ribosomal subunit protein bL21 (103 aa).

It belongs to the bacterial ribosomal protein bL21 family. In terms of assembly, part of the 50S ribosomal subunit. Contacts protein L20.

This protein binds to 23S rRNA in the presence of protein L20. In Mycolicibacterium paratuberculosis (strain ATCC BAA-968 / K-10) (Mycobacterium paratuberculosis), this protein is Large ribosomal subunit protein bL21.